The chain runs to 623 residues: Chaperone protein HtpG (623 aa).

The tract at residues 1–336 is a; substrate-binding; sequence MVSKQQTMGF…ASDLPLNISR (336 aa). Positions 337-550 are b; sequence EILQDNKQVE…EQDMGLEMQR (214 aa). The interval 551-623 is c; that stretch reads ILQAAGQQVP…NRVNRLLVSS (73 aa).

Belongs to the heat shock protein 90 family. In terms of assembly, homodimer.

Its subcellular location is the cytoplasm. In terms of biological role, molecular chaperone. Has ATPase activity. The sequence is that of Chaperone protein HtpG from Legionella pneumophila subsp. pneumophila (strain Philadelphia 1 / ATCC 33152 / DSM 7513).